Here is a 513-residue protein sequence, read N- to C-terminus: Light-independent protochlorophyllide reductase subunit B (513 aa).

D36 lines the [4Fe-4S] cluster pocket. D299 (proton donor) is an active-site residue. 434-435 (GM) provides a ligand contact to substrate.

The protein belongs to the ChlB/BchB/BchZ family. In terms of assembly, protochlorophyllide reductase is composed of three subunits; ChlL, ChlN and ChlB. Forms a heterotetramer of two ChlB and two ChlN subunits. The cofactor is [4Fe-4S] cluster.

The protein resides in the plastid. Its subcellular location is the chloroplast. It carries out the reaction chlorophyllide a + oxidized 2[4Fe-4S]-[ferredoxin] + 2 ADP + 2 phosphate = protochlorophyllide a + reduced 2[4Fe-4S]-[ferredoxin] + 2 ATP + 2 H2O. It participates in porphyrin-containing compound metabolism; chlorophyll biosynthesis (light-independent). Component of the dark-operative protochlorophyllide reductase (DPOR) that uses Mg-ATP and reduced ferredoxin to reduce ring D of protochlorophyllide (Pchlide) to form chlorophyllide a (Chlide). This reaction is light-independent. The NB-protein (ChlN-ChlB) is the catalytic component of the complex. This chain is Light-independent protochlorophyllide reductase subunit B, found in Staurastrum punctulatum (Green alga).